We begin with the raw amino-acid sequence, 284 residues long: 2-dehydro-3-deoxyphosphooctonate aldolase (284 aa).

The protein belongs to the KdsA family.

Its subcellular location is the cytoplasm. The catalysed reaction is D-arabinose 5-phosphate + phosphoenolpyruvate + H2O = 3-deoxy-alpha-D-manno-2-octulosonate-8-phosphate + phosphate. It functions in the pathway carbohydrate biosynthesis; 3-deoxy-D-manno-octulosonate biosynthesis; 3-deoxy-D-manno-octulosonate from D-ribulose 5-phosphate: step 2/3. It participates in bacterial outer membrane biogenesis; lipopolysaccharide biosynthesis. The protein is 2-dehydro-3-deoxyphosphooctonate aldolase of Yersinia enterocolitica serotype O:8 / biotype 1B (strain NCTC 13174 / 8081).